The chain runs to 397 residues: Proteasome-activating nucleotidase (397 aa).

Residues 12–58 (GYEDYITFLKRRIRQLELQVRTLEADKERLERELSRLRTEMSRLRQP) adopt a coiled-coil conformation. ATP contacts are provided by residues 182–187 (GCGKTL) and His321. A docks into pockets in the proteasome alpha-ring to cause gate opening region spans residues 395–397 (MYG).

Belongs to the AAA ATPase family. Homohexamer. The hexameric complex has a two-ring architecture resembling a top hat that caps the 20S proteasome core at one or both ends. Upon ATP-binding, the C-terminus of PAN interacts with the alpha-rings of the proteasome core by binding to the intersubunit pockets.

Its subcellular location is the cytoplasm. In terms of biological role, ATPase which is responsible for recognizing, binding, unfolding and translocation of substrate proteins into the archaeal 20S proteasome core particle. Is essential for opening the gate of the 20S proteasome via an interaction with its C-terminus, thereby allowing substrate entry and access to the site of proteolysis. Thus, the C-termini of the proteasomal ATPase function like a 'key in a lock' to induce gate opening and therefore regulate proteolysis. Unfolding activity requires energy from ATP hydrolysis, whereas ATP binding alone promotes ATPase-20S proteasome association which triggers gate opening, and supports translocation of unfolded substrates. This Thermococcus gammatolerans (strain DSM 15229 / JCM 11827 / EJ3) protein is Proteasome-activating nucleotidase.